We begin with the raw amino-acid sequence, 791 residues long: Sphingomyelin phosphodiesterase 4 (791 aa).

The chain crosses the membrane as a helical span at residues 755–775; it reads LFALLSFGLFSSTGLILIISF.

Requires Mg(2+) as cofactor.

The protein resides in the endoplasmic reticulum membrane. The protein localises to the golgi apparatus membrane. It is found in the nucleus envelope. It localises to the cell membrane. Its subcellular location is the sarcolemma. It carries out the reaction a sphingomyelin + H2O = phosphocholine + an N-acylsphing-4-enine + H(+). Its function is as follows. Catalyzes the hydrolysis of membrane sphingomyelin to form phosphorylcholine and ceramide. It has a relevant role in the homeostasis of membrane sphingolipids, thereby influencing membrane integrity, and endoplasmic reticulum organization and function. May sensitize cells to DNA damage-induced apoptosis. This Danio rerio (Zebrafish) protein is Sphingomyelin phosphodiesterase 4 (smpd4).